Here is a 2340-residue protein sequence, read N- to C-terminus: Protein pad-1 (2340 aa).

2 disordered regions span residues 411–458 (KLIK…EPSI) and 1910–1959 (TRNS…RRDP). Basic and acidic residues predominate over residues 415-432 (KRPDSKPPRKPGDREGLH). A compositionally biased stretch (polar residues) spans 437 to 448 (SLHSGVSGNSED). The segment covering 1922–1934 (GGSITSGSTSTTT) has biased composition (low complexity).

This sequence belongs to the DOP1 family.

In terms of biological role, essential for cell patterning during gastrulation. May be involved in protein traffic between late Golgi and early endosomes. The chain is Protein pad-1 (pad-1) from Caenorhabditis briggsae.